A 240-amino-acid polypeptide reads, in one-letter code: tRNA (guanine-N(1)-)-methyltransferase (240 aa).

Residues glycine 108 and 127 to 132 contribute to the S-adenosyl-L-methionine site; that span reads LGDYIL.

This sequence belongs to the RNA methyltransferase TrmD family. As to quaternary structure, homodimer.

Its subcellular location is the cytoplasm. The enzyme catalyses guanosine(37) in tRNA + S-adenosyl-L-methionine = N(1)-methylguanosine(37) in tRNA + S-adenosyl-L-homocysteine + H(+). Specifically methylates guanosine-37 in various tRNAs. This Streptococcus sanguinis (strain SK36) protein is tRNA (guanine-N(1)-)-methyltransferase.